The following is a 358-amino-acid chain: NADH-quinone oxidoreductase subunit H (358 aa).

The next 8 helical transmembrane spans lie at 30–50 (VVIG…LIYM), 96–116 (FLYN…FSCL), 129–149 (VGVF…LLAG), 168–188 (IISY…LMGT), 201–221 (GWFI…YLIA), 265–285 (FIVA…LHIV), 297–317 (IPGF…LMWI), and 336–356 (YLVP…VFGL).

The protein belongs to the complex I subunit 1 family. In terms of assembly, NDH-1 is composed of 14 different subunits. Subunits NuoA, H, J, K, L, M, N constitute the membrane sector of the complex.

It is found in the cell inner membrane. The enzyme catalyses a quinone + NADH + 5 H(+)(in) = a quinol + NAD(+) + 4 H(+)(out). Functionally, NDH-1 shuttles electrons from NADH, via FMN and iron-sulfur (Fe-S) centers, to quinones in the respiratory chain. The immediate electron acceptor for the enzyme in this species is believed to be ubiquinone. Couples the redox reaction to proton translocation (for every two electrons transferred, four hydrogen ions are translocated across the cytoplasmic membrane), and thus conserves the redox energy in a proton gradient. This subunit may bind ubiquinone. This chain is NADH-quinone oxidoreductase subunit H, found in Bacteroides fragilis (strain ATCC 25285 / DSM 2151 / CCUG 4856 / JCM 11019 / LMG 10263 / NCTC 9343 / Onslow / VPI 2553 / EN-2).